The chain runs to 395 residues: Protein SGT1 (395 aa).

Lysine 32 is covalently cross-linked (Glycyl lysine isopeptide (Lys-Gly) (interchain with G-Cter in ubiquitin)). Residues 137–175 (KKNKKQKDSTNKHTIKPVESIENRGDNNSSHSPISPLKI) form a disordered region. Phosphoserine is present on residues serine 168 and serine 171. The region spanning 182-277 (SPKFKIDWYQ…IDSTQWKKLE (96 aa)) is the CS domain. The 84-residue stretch at 312–395 (SYPSSSKKKI…PPEGMEPKHW (84 aa)) folds into the SGS domain. The tract at residues 373 to 395 (DWEDVSKGTVKTSPPEGMEPKHW) is disordered.

The protein belongs to the SGT1 family. As to quaternary structure, interacts with SKP1/CBF3D. Part of SCF E3 ubiquitin ligase complexes containing SKP1, CDC53, HRT1 and some F-box proteins. Interacts with CIR1/CDC35.

Functionally, involved in ubiquitination and subsequent proteasomal degradation of target proteins. Required for both entry into S phase and kinetochore function. Also involved in cyclic AMP (cAMP) pathway, possibly by participating in the assembly or the conformational activation of specific multiprotein complexes. The protein is Protein SGT1 of Saccharomyces cerevisiae (strain ATCC 204508 / S288c) (Baker's yeast).